Here is a 930-residue protein sequence, read N- to C-terminus: GPI ethanolamine phosphate transferase 1 (930 aa).

The Cytoplasmic segment spans residues methionine 1–glycine 8. The helical transmembrane segment at phenylalanine 9–phenylalanine 29 threads the bilayer. The Lumenal segment spans residues valine 30 to arginine 466. Asparagine 148 is a glycosylation site (N-linked (GlcNAc...) asparagine). A helical membrane pass occupies residues threonine 467–leucine 487. Topologically, residues histidine 488 to arginine 498 are cytoplasmic. Residues threonine 499–tyrosine 519 form a helical membrane-spanning segment. Over glutamine 520 to glycine 521 the chain is Lumenal. Residues serine 522–alanine 542 form a helical membrane-spanning segment. Over arginine 543 to aspartate 569 the chain is Cytoplasmic. A helical membrane pass occupies residues isoleucine 570–phenylalanine 590. At glutamate 591–asparagine 611 the chain is on the lumenal side. A helical transmembrane segment spans residues isoleucine 612–alanine 632. Topologically, residues serine 633–glycine 639 are cytoplasmic. Residues leucine 640–phenylalanine 660 form a helical membrane-spanning segment. Residues alanine 661–threonine 684 are Lumenal-facing. The chain crosses the membrane as a helical span at residues phenylalanine 685–valine 705. The Cytoplasmic portion of the chain corresponds to threonine 706–valine 761. The chain crosses the membrane as a helical span at residues alanine 762–isoleucine 782. The Lumenal segment spans residues serine 783–glycine 803. The chain crosses the membrane as a helical span at residues alanine 804–leucine 824. Over asparagine 825–serine 833 the chain is Cytoplasmic. The helical transmembrane segment at alanine 834–valine 854 threads the bilayer. The Lumenal portion of the chain corresponds to arginine 855–phenylalanine 870. Residues cysteine 871–isoleucine 891 form a helical membrane-spanning segment. Topologically, residues serine 892–glutamate 930 are cytoplasmic.

This sequence belongs to the PIGG/PIGN/PIGO family. PIGN subfamily.

Its subcellular location is the endoplasmic reticulum membrane. Its pathway is glycolipid biosynthesis; glycosylphosphatidylinositol-anchor biosynthesis. Ethanolamine phosphate transferase involved in glycosylphosphatidylinositol-anchor biosynthesis. Transfers ethanolamine phosphate to the first alpha-1,4-linked mannose of the glycosylphosphatidylinositol precursor of GPI-anchor. This is GPI ethanolamine phosphate transferase 1 (mcd4) from Emericella nidulans (strain FGSC A4 / ATCC 38163 / CBS 112.46 / NRRL 194 / M139) (Aspergillus nidulans).